We begin with the raw amino-acid sequence, 335 residues long: Methionine import ATP-binding protein MetN 1 (335 aa).

In terms of domain architecture, ABC transporter spans 2 to 242; that stretch reads IEFHNVHKTY…PQHATTRRFV (241 aa). 38–45 contacts ATP; the sequence is GHSGAGKS.

This sequence belongs to the ABC transporter superfamily. Methionine importer (TC 3.A.1.24) family. The complex is composed of two ATP-binding proteins (MetN), two transmembrane proteins (MetI) and a solute-binding protein (MetQ).

It localises to the cell inner membrane. It carries out the reaction L-methionine(out) + ATP + H2O = L-methionine(in) + ADP + phosphate + H(+). The catalysed reaction is D-methionine(out) + ATP + H2O = D-methionine(in) + ADP + phosphate + H(+). Functionally, part of the ABC transporter complex MetNIQ involved in methionine import. Responsible for energy coupling to the transport system. This chain is Methionine import ATP-binding protein MetN 1, found in Pseudomonas syringae pv. syringae (strain B728a).